The sequence spans 1173 residues: MARHGDTRSPSPVGSTYSSSRRSRRDDDRYERKRDDGRSYRRSRSPERRYRERDRDRDSYRRRDHSVDRRDSHRDEDNYRRRDRSRDRRRSRDRDHDRDYRRRSRSRDRDYRSRRDDSRDRVRRRTDDSADLKRKSRRDDSRDRTRGAEPKSREASTPAIPTRTGPTDDEKRAERLAKLEAWKQKQAAEKERKQKEAEASGGPRNILEEIDRKSGLSPAVSSPQSPATQGVDAAPAAYAGKFDPKAIAKNAAQTPAAPSVLGNDVAVPSSAKTSNAQTARVQASKASGNAPSPAVLKAKGNVGSFGLGTKQVADNEKSIATKTLGFGEEESTRRKLERLPTPPLDDADASKTAETNADDDDDVDMQDGETEEDAAAAARVAAERREERLQNESLTKTTNGNTTAKAEEADKMEVDAQEEELDPLDAFMSELAESAPPKKKAGAKFSKAQEPEAIFGDEHDVSMTAVGEGDAEDFLAIASKAKKKKDIPTVDHNKVEYEPFRRKFYTEPSDLAQMSEEEAANLRLELDGIKVRGLDVPKPVQKWSQCGLGIQTLDVIDKLGFASLTSIQAQAIPAIMSGRDVIGVAKTGSGKTMAFLIPMFRHIKDQRPLENMEGPIGLIMTPTRELATQIHKDCKPFLKALNLRAVCAYGGAPIKDQIAELKRGAEIIVCTPGRMIDLLAANAGRVTNLRRVTYVVLDEADRMFDMGFEPQVMKILSNVRPDRQTVLFSATFPRNMEALARKTLTKPIEIVVGGRSVVAPEITQIVEVCNEEKKFVRLLELLGNLYSTDENEDARSLIFVDRQEAADTLLRELMRKGYPCMSIHGGKDQIDRDSTIEDFKAGIFPVLIATSVAARGLDVKQLKLVVNYDAPNHLEDYVHRAGRTGRAGNTGTAVTFLTEDQERYSVDIAKALKQSGQEVPEAVQKLVDSFLEKVKAGKEKASNSGFGGKGLERLDQERDAARMRERRTYKTGEEGEDEEEKDEKKNEQAEEQFNKVLSAVQSTSAQLPGVPKGIDLDGKITVHKREVDPNAPNNPLDKVGSAVADIHARLSRAGVMRSGVPIDNRGPDAGAFHATLEINDFPQKARWAVTNRTNVAKILEATGTSITTKGSFYPAGKEPGPGENPKLYILVEGETELSVTNAMRELMRLLKEGTIAAVDSESRAPASGRYSVV.

Disordered regions lie at residues methionine 1 to aspartate 232 and proline 268 to glutamate 418. The span at arginine 8 to serine 20 shows a compositional bias: low complexity. Composition is skewed to basic and acidic residues over residues arginine 24–tyrosine 100, arginine 107–glutamate 154, and proline 166–glutamate 198. Polar residues-rich tracts occupy residues alanine 219–threonine 228 and serine 270–alanine 290. Over residues asparagine 356–alanine 374 the composition is skewed to acidic residues. The span at alanine 381–glutamine 390 shows a compositional bias: basic and acidic residues. The segment covering threonine 395–alanine 404 has biased composition (low complexity). Positions lysine 405–valine 414 are enriched in basic and acidic residues. Positions glutamine 541–alanine 569 match the Q motif motif. One can recognise a Helicase ATP-binding domain in the interval isoleucine 572 to isoleucine 750. Alanine 585–threonine 592 is a binding site for ATP. The short motif at aspartate 698–aspartate 701 is the DEAD box element. Residues glutamate 761–valine 927 form the Helicase C-terminal domain. The tract at residues lysine 938–alanine 989 is disordered. The span at glycine 950–glutamate 973 shows a compositional bias: basic and acidic residues.

The protein belongs to the DEAD box helicase family. DDX46/PRP5 subfamily.

Its subcellular location is the nucleus. The catalysed reaction is ATP + H2O = ADP + phosphate + H(+). Functionally, ATP-dependent RNA helicase involved spliceosome assembly and in nuclear splicing. Catalyzes an ATP-dependent conformational change of U2 snRNP. Bridges U1 and U2 snRNPs and enables stable U2 snRNP association with intron RNA. This Emericella nidulans (strain FGSC A4 / ATCC 38163 / CBS 112.46 / NRRL 194 / M139) (Aspergillus nidulans) protein is Pre-mRNA-processing ATP-dependent RNA helicase prp5 (prp5).